The chain runs to 864 residues: DNA mismatch repair protein MutS (864 aa).

An ATP-binding site is contributed by 607–614; it reads GPNMGGKS.

It belongs to the DNA mismatch repair MutS family.

Its function is as follows. This protein is involved in the repair of mismatches in DNA. It is possible that it carries out the mismatch recognition step. This protein has a weak ATPase activity. This chain is DNA mismatch repair protein MutS, found in Neisseria gonorrhoeae (strain ATCC 700825 / FA 1090).